The chain runs to 161 residues: Cytochrome b6-f complex subunit 4 (161 aa).

3 helical membrane-spanning segments follow: residues Leu37–Val57, Leu96–Glu116, and Ala130–Phe150.

The protein belongs to the cytochrome b family. PetD subfamily. As to quaternary structure, the 4 large subunits of the cytochrome b6-f complex are cytochrome b6, subunit IV (17 kDa polypeptide, PetD), cytochrome f and the Rieske protein, while the 4 small subunits are PetG, PetL, PetM and PetN. The complex functions as a dimer.

The protein resides in the cellular thylakoid membrane. Its function is as follows. Component of the cytochrome b6-f complex, which mediates electron transfer between photosystem II (PSII) and photosystem I (PSI), cyclic electron flow around PSI, and state transitions. This chain is Cytochrome b6-f complex subunit 4, found in Synechococcus elongatus.